Here is a 171-residue protein sequence, read N- to C-terminus: Replication restart protein PriC (171 aa).

It belongs to the PriC family. Monomer. Component of the replication restart primosome, which is composed of PriA, PriB, PriC, DnaBe and DnaT; DnaG primase associates transiently with this complex. Interacts with the C-terminus of SSB. SSB interaction is required to load the main replicative helicase onto substrate replication forks. Interacts with helicase DnaB alone and in the DnaB-DnaC complex, probably 1:1 binding with DnaB.

Functionally, involved in the restart of stalled replication forks, which reloads the DnaB replicative helicase on sites other than the origin of replication. In vitro can load (E.coli) DnaB replicative helicase from a DnaB-DnaC complex on a single-stranded DNA (ssDNA)-binding protein (SSB)-coated stalled replication fork with no leading- or lagging-strand in the absence of other primosome proteins (PriA, PriB or DnaT). Binds SSB (tested with E.coli protein) and ssDNA. Complements priC in an E.coli priB-priC double deletion. The polypeptide is Replication restart protein PriC (Cronobacter sakazakii (strain ATCC BAA-894) (Enterobacter sakazakii)).